The sequence spans 462 residues: Bifunctional protein GlmU (462 aa).

Residues 1–235 (MSYINFSAII…TFEIMGVNSK (235 aa)) are pyrophosphorylase. UDP-N-acetyl-alpha-D-glucosamine-binding positions include 11-14 (LAAG), Lys25, Gln80, 85-86 (GT), 107-109 (YGD), Gly144, Glu159, and Asn233. Residue Asp109 participates in Mg(2+) binding. Residue Asn233 participates in Mg(2+) binding. Residues 236–256 (SDFVDLDKQYQQRKVQCLLSS) are linker. The segment at 257–462 (GLMIIDPNRF…LNWKRLKNKK (206 aa)) is N-acetyltransferase. UDP-N-acetyl-alpha-D-glucosamine contacts are provided by Arg339 and Lys357. The Proton acceptor role is filled by His369. 2 residues coordinate UDP-N-acetyl-alpha-D-glucosamine: Tyr372 and Asn383. Residues Ala386, 392-393 (NY), Ala429, and Arg446 each bind acetyl-CoA.

In the N-terminal section; belongs to the N-acetylglucosamine-1-phosphate uridyltransferase family. It in the C-terminal section; belongs to the transferase hexapeptide repeat family. In terms of assembly, homotrimer. It depends on Mg(2+) as a cofactor.

The protein resides in the cytoplasm. It carries out the reaction alpha-D-glucosamine 1-phosphate + acetyl-CoA = N-acetyl-alpha-D-glucosamine 1-phosphate + CoA + H(+). The enzyme catalyses N-acetyl-alpha-D-glucosamine 1-phosphate + UTP + H(+) = UDP-N-acetyl-alpha-D-glucosamine + diphosphate. Its pathway is nucleotide-sugar biosynthesis; UDP-N-acetyl-alpha-D-glucosamine biosynthesis; N-acetyl-alpha-D-glucosamine 1-phosphate from alpha-D-glucosamine 6-phosphate (route II): step 2/2. It functions in the pathway nucleotide-sugar biosynthesis; UDP-N-acetyl-alpha-D-glucosamine biosynthesis; UDP-N-acetyl-alpha-D-glucosamine from N-acetyl-alpha-D-glucosamine 1-phosphate: step 1/1. The protein operates within bacterial outer membrane biogenesis; LPS lipid A biosynthesis. In terms of biological role, catalyzes the last two sequential reactions in the de novo biosynthetic pathway for UDP-N-acetylglucosamine (UDP-GlcNAc). The C-terminal domain catalyzes the transfer of acetyl group from acetyl coenzyme A to glucosamine-1-phosphate (GlcN-1-P) to produce N-acetylglucosamine-1-phosphate (GlcNAc-1-P), which is converted into UDP-GlcNAc by the transfer of uridine 5-monophosphate (from uridine 5-triphosphate), a reaction catalyzed by the N-terminal domain. The chain is Bifunctional protein GlmU from Blochmanniella pennsylvanica (strain BPEN).